The sequence spans 301 residues: Sulfate adenylyltransferase subunit 2 (301 aa).

The segment at 279 to 301 is disordered; it reads RQGRLIDRDEAGSMEKKKREGYF.

The protein belongs to the PAPS reductase family. CysD subfamily. As to quaternary structure, sulfate-activating enzymes, NodP and NodQ, may be physically associated.

It catalyses the reaction sulfate + ATP + H(+) = adenosine 5'-phosphosulfate + diphosphate. Its function is as follows. Proposed to provide activated sulfate for transfer to nod factor. The polypeptide is Sulfate adenylyltransferase subunit 2 (nodP) (Rhizobium sp. (strain N33)).